Consider the following 250-residue polypeptide: 3-deoxy-manno-octulosonate cytidylyltransferase (250 aa).

The protein belongs to the KdsB family.

Its subcellular location is the cytoplasm. It catalyses the reaction 3-deoxy-alpha-D-manno-oct-2-ulosonate + CTP = CMP-3-deoxy-beta-D-manno-octulosonate + diphosphate. Its pathway is nucleotide-sugar biosynthesis; CMP-3-deoxy-D-manno-octulosonate biosynthesis; CMP-3-deoxy-D-manno-octulosonate from 3-deoxy-D-manno-octulosonate and CTP: step 1/1. It participates in bacterial outer membrane biogenesis; lipopolysaccharide biosynthesis. In terms of biological role, activates KDO (a required 8-carbon sugar) for incorporation into bacterial lipopolysaccharide in Gram-negative bacteria. The polypeptide is 3-deoxy-manno-octulosonate cytidylyltransferase (Azorhizobium caulinodans (strain ATCC 43989 / DSM 5975 / JCM 20966 / LMG 6465 / NBRC 14845 / NCIMB 13405 / ORS 571)).